Here is a 779-residue protein sequence, read N- to C-terminus: Phosphoribosylformylglycinamidine synthase subunit PurL (779 aa).

His-52 is an active-site residue. 2 residues coordinate ATP: Tyr-55 and Lys-94. A Mg(2+)-binding site is contributed by Glu-96. Residues 97–100 and Arg-119 contribute to the substrate site; that span reads SHNH. Residue His-98 is the Proton acceptor of the active site. Position 120 (Asp-120) interacts with Mg(2+). A substrate-binding site is contributed by Gln-243. Asp-271 is a binding site for Mg(2+). Substrate is bound at residue 315–317; it reads ESQ. Asn-523 and Gly-560 together coordinate ATP. Asn-561 contributes to the Mg(2+) binding site. Position 563 (Ser-563) interacts with substrate.

Belongs to the FGAMS family. In terms of assembly, monomer. Part of the FGAM synthase complex composed of 1 PurL, 1 PurQ and 2 PurS subunits.

It is found in the cytoplasm. The enzyme catalyses N(2)-formyl-N(1)-(5-phospho-beta-D-ribosyl)glycinamide + L-glutamine + ATP + H2O = 2-formamido-N(1)-(5-O-phospho-beta-D-ribosyl)acetamidine + L-glutamate + ADP + phosphate + H(+). It participates in purine metabolism; IMP biosynthesis via de novo pathway; 5-amino-1-(5-phospho-D-ribosyl)imidazole from N(2)-formyl-N(1)-(5-phospho-D-ribosyl)glycinamide: step 1/2. In terms of biological role, part of the phosphoribosylformylglycinamidine synthase complex involved in the purines biosynthetic pathway. Catalyzes the ATP-dependent conversion of formylglycinamide ribonucleotide (FGAR) and glutamine to yield formylglycinamidine ribonucleotide (FGAM) and glutamate. The FGAM synthase complex is composed of three subunits. PurQ produces an ammonia molecule by converting glutamine to glutamate. PurL transfers the ammonia molecule to FGAR to form FGAM in an ATP-dependent manner. PurS interacts with PurQ and PurL and is thought to assist in the transfer of the ammonia molecule from PurQ to PurL. In Prochlorococcus marinus (strain AS9601), this protein is Phosphoribosylformylglycinamidine synthase subunit PurL.